The sequence spans 283 residues: 4-diphosphocytidyl-2-C-methyl-D-erythritol kinase (283 aa).

Residue Lys-10 is part of the active site. ATP is bound at residue 99–109; sequence PMGGGLGGGSS. Asp-141 is a catalytic residue.

This sequence belongs to the GHMP kinase family. IspE subfamily. As to quaternary structure, homodimer.

The enzyme catalyses 4-CDP-2-C-methyl-D-erythritol + ATP = 4-CDP-2-C-methyl-D-erythritol 2-phosphate + ADP + H(+). Its pathway is isoprenoid biosynthesis; isopentenyl diphosphate biosynthesis via DXP pathway; isopentenyl diphosphate from 1-deoxy-D-xylulose 5-phosphate: step 3/6. Functionally, catalyzes the phosphorylation of the position 2 hydroxy group of 4-diphosphocytidyl-2C-methyl-D-erythritol. This chain is 4-diphosphocytidyl-2-C-methyl-D-erythritol kinase, found in Shigella dysenteriae serotype 1 (strain Sd197).